A 791-amino-acid polypeptide reads, in one-letter code: DUF1769 family protein duc1 (791 aa).

A disordered region spans residues 158-189; that stretch reads ADSQESDTESLPEINDSSDVSLSDLPSTNVTP. A compositionally biased stretch (low complexity) spans 174–184; the sequence is SSDVSLSDLPS. An FFAT motif is present at residues 373-379; that stretch reads RYFTALE. Position 374 is a phosphotyrosine (tyrosine 374). A Phosphothreonine modification is found at threonine 376. Disordered stretches follow at residues 381–505, 542–606, and 630–658; these read QQDQ…SNRR, NVAG…VDGK, and PKPV…NLDP. The span at 415 to 426 shows a compositional bias: basic residues; it reads LIKRMSLRSKKS. The segment covering 444-453 has biased composition (low complexity); sequence STASAASTSA. The span at 455–473 shows a compositional bias: basic and acidic residues; the sequence is KTEKEKKMSAPRRSLDKLI. Serine 477 and serine 493 each carry phosphoserine. Basic residues predominate over residues 477–487; sequence SLHRHHHHHHK. Residues 555-564 show a composition bias toward polar residues; it reads EQTSITSGVP. A Phosphoserine modification is found at serine 574. Residues 574–586 show a composition bias toward basic and acidic residues; the sequence is STPEKIVEERSID. Residues 587-601 are compositionally biased toward polar residues; it reads EVSQSNTPSSKQLPQ.

The protein belongs to the UPF0590 family. In terms of assembly, interacts (via FFAT-motif) with scs2 (via MSP domain); the interaction is direct and serves to restrict the localization of duc1 to areas of cell membrane-endoplasmic reticulum contact sites, and away from the cell division site.

It localises to the cell membrane. Promotes the proper distribution of phosphatidylinositol 4,5-bisphosphate (PtdIns(4,5)P2/PIP2) synthesis at the cell membrane. May bind phosphatidylinositol 4,5-bisphosphate (PtdIns(4,5)P2/PIP2) and is required for robust anchoring of the contractile ring to the cell membrane. The chain is DUF1769 family protein duc1 from Schizosaccharomyces pombe (strain 972 / ATCC 24843) (Fission yeast).